A 474-amino-acid chain; its full sequence is UDP-glycosyltransferase 71E1 (474 aa).

UDP-alpha-D-glucose contacts are provided by residues S275, 341 to 342 (WA), 359 to 367 (HCGWNSTLE), and 381 to 384 (YAEQ).

Belongs to the UDP-glycosyltransferase family.

Functionally, may glycosylate diterpenes or flavonols in leaves. The protein is UDP-glycosyltransferase 71E1 of Stevia rebaudiana (Stevia).